A 72-amino-acid polypeptide reads, in one-letter code: DNA-directed RNA polymerase subunit omega (72 aa).

It belongs to the RNA polymerase subunit omega family. As to quaternary structure, the RNAP catalytic core consists of 2 alpha, 1 beta, 1 beta' and 1 omega subunit. When a sigma factor is associated with the core the holoenzyme is formed, which can initiate transcription.

It catalyses the reaction RNA(n) + a ribonucleoside 5'-triphosphate = RNA(n+1) + diphosphate. Functionally, promotes RNA polymerase assembly. Latches the N- and C-terminal regions of the beta' subunit thereby facilitating its interaction with the beta and alpha subunits. In Francisella tularensis subsp. holarctica (strain LVS), this protein is DNA-directed RNA polymerase subunit omega.